The sequence spans 612 residues: Protein hinderin (612 aa).

Ser-20 carries the post-translational modification Phosphoserine. Residues 90–166 adopt a coiled-coil conformation; sequence LKDLCLEDKR…CQELLSLYQK (77 aa). Ser-178 is subject to Phosphoserine. The stretch at 362–406 forms a coiled coil; sequence IEKQLSEDRRQQLMLQKMELEIEKERLQHLLAQQETKLLLKQQQL. A compositionally biased stretch (polar residues) spans 462-477; sequence STSFKKCPDSPNSGQN. 2 disordered regions span residues 462–484 and 509–598; these read STSF…KKTV and ETVT…RSPE. Ser-471, Ser-527, and Ser-558 each carry phosphoserine. Polar residues-rich tracts occupy residues 555 to 568 and 575 to 585; these read QSLS…SQPH and TWSTLRPTPQK.

In terms of assembly, interacts (via N- and C-terminal domains) with SMC3 (via central hinge region).

Its function is as follows. Competes with SMC1 for binding to SMC3. May affect the availability of SMC3 to engage in the formation of multimeric protein complexes. The polypeptide is Protein hinderin (Kiaa1328) (Mus musculus (Mouse)).